We begin with the raw amino-acid sequence, 394 residues long: 3-dehydroquinate synthase (394 aa).

NAD(+)-binding positions include 112–116, 136–137, K149, K158, and 176–179; these read GVIGD, TT, and TLAT. Zn(2+) contacts are provided by E191, H254, and H276. The segment covering 371–388 has biased composition (polar residues); that stretch reads STNQHTTYSPHQHATTKP. Residues 371–394 form a disordered region; sequence STNQHTTYSPHQHATTKPPNRRPH.

It belongs to the sugar phosphate cyclases superfamily. Dehydroquinate synthase family. It depends on NAD(+) as a cofactor. Co(2+) serves as cofactor. The cofactor is Zn(2+).

The protein resides in the cytoplasm. The catalysed reaction is 7-phospho-2-dehydro-3-deoxy-D-arabino-heptonate = 3-dehydroquinate + phosphate. It functions in the pathway metabolic intermediate biosynthesis; chorismate biosynthesis; chorismate from D-erythrose 4-phosphate and phosphoenolpyruvate: step 2/7. Catalyzes the conversion of 3-deoxy-D-arabino-heptulosonate 7-phosphate (DAHP) to dehydroquinate (DHQ). In Xylella fastidiosa (strain 9a5c), this protein is 3-dehydroquinate synthase.